The sequence spans 591 residues: Flagellar hook protein FlgE (591 aa).

This sequence belongs to the flagella basal body rod proteins family.

It is found in the bacterial flagellum basal body. The protein is Flagellar hook protein FlgE (flgE) of Caulobacter vibrioides (strain ATCC 19089 / CIP 103742 / CB 15) (Caulobacter crescentus).